The sequence spans 315 residues: DNA-directed RNA polymerase subunit alpha (315 aa).

Positions 1–228 are alpha N-terminal domain (alpha-NTD); sequence MLEIEKPVIQ…EHFKLFMTLT (228 aa). Residues 245–315 are alpha C-terminal domain (alpha-CTD); it reads KEKALEMTIE…LGLNLRLNDE (71 aa).

This sequence belongs to the RNA polymerase alpha chain family. Homodimer. The RNAP catalytic core consists of 2 alpha, 1 beta, 1 beta' and 1 omega subunit. When a sigma factor is associated with the core the holoenzyme is formed, which can initiate transcription.

It catalyses the reaction RNA(n) + a ribonucleoside 5'-triphosphate = RNA(n+1) + diphosphate. Functionally, DNA-dependent RNA polymerase catalyzes the transcription of DNA into RNA using the four ribonucleoside triphosphates as substrates. This is DNA-directed RNA polymerase subunit alpha from Clostridium perfringens (strain ATCC 13124 / DSM 756 / JCM 1290 / NCIMB 6125 / NCTC 8237 / Type A).